Here is a 366-residue protein sequence, read N- to C-terminus: tRNA N6-adenosine threonylcarbamoyltransferase (366 aa).

Residues H130, H134, and Y151 each contribute to the a divalent metal cation site. Residues 151-155, D183, G198, E202, and N297 contribute to the substrate site; that span reads YVSGG. D325 contributes to the a divalent metal cation binding site.

This sequence belongs to the KAE1 / TsaD family. Component of the EKC/KEOPS complex composed of at least BUD32, CGI121, GON7, KAE1 and PCC1; the whole complex dimerizes. The cofactor is a divalent metal cation.

The protein localises to the cytoplasm. Its subcellular location is the nucleus. It catalyses the reaction L-threonylcarbamoyladenylate + adenosine(37) in tRNA = N(6)-L-threonylcarbamoyladenosine(37) in tRNA + AMP + H(+). Component of the EKC/KEOPS complex that is required for the formation of a threonylcarbamoyl group on adenosine at position 37 (t(6)A37) in tRNAs that read codons beginning with adenine. The complex is probably involved in the transfer of the threonylcarbamoyl moiety of threonylcarbamoyl-AMP (TC-AMP) to the N6 group of A37. KAE1 likely plays a direct catalytic role in this reaction, but requires other protein(s) of the complex to fulfill this activity. The EKC/KEOPS complex also promotes both telomere uncapping and telomere elongation. The complex is required for efficient recruitment of transcriptional coactivators. The chain is tRNA N6-adenosine threonylcarbamoyltransferase from Cryptococcus neoformans var. neoformans serotype D (strain JEC21 / ATCC MYA-565) (Filobasidiella neoformans).